We begin with the raw amino-acid sequence, 309 residues long: Putative rhizopine-binding protein (309 aa).

The N-terminal stretch at 1–20 (MKKFIIGIAAAVLVSTAAHA) is a signal peptide.

It belongs to the bacterial solute-binding protein 2 family.

Its subcellular location is the periplasm. In terms of biological role, involved in rhizopine (L-3-O-methyl-scyllo-inosamine) catabolism. Could be involved in its high affinity transport. The polypeptide is Putative rhizopine-binding protein (mocB) (Rhizobium meliloti (Ensifer meliloti)).